A 307-amino-acid chain; its full sequence is Ribosomal protein uL3 glutamine methyltransferase (307 aa).

This sequence belongs to the protein N5-glutamine methyltransferase family. PrmB subfamily.

It catalyses the reaction L-glutaminyl-[ribosomal protein uL3] + S-adenosyl-L-methionine = N(5)-methyl-L-glutaminyl-[ribosomal protein uL3] + S-adenosyl-L-homocysteine + H(+). In terms of biological role, methylates large ribosomal subunit protein uL3 on a specific glutamine residue. In Burkholderia pseudomallei (strain K96243), this protein is Ribosomal protein uL3 glutamine methyltransferase.